Reading from the N-terminus, the 465-residue chain is 5'-adenylylsulfate reductase 1, chloroplastic (465 aa).

Residues Met1 to Arg53 constitute a chloroplast transit peptide. The segment at Leu73–Gly327 is reductase domain. The 122-residue stretch at Ser344–Arg465 folds into the Thioredoxin domain. Residues Cys385 and Cys388 each act as nucleophile in the active site. An intrachain disulfide couples Cys385 to Cys388.

It belongs to the APS reductase family. The cofactor is [4Fe-4S] cluster. As to expression, leaves, roots and stem.

The protein resides in the plastid. The protein localises to the chloroplast. It carries out the reaction glutathione disulfide + sulfite + AMP + 2 H(+) = adenosine 5'-phosphosulfate + 2 glutathione. Its activity is regulated as follows. Stimulated by sodium sulfate &gt; ammonium sulfate and is sensitive to inactivation by 5'AMP. Reduces sulfate for Cys biosynthesis. Substrate preference is adenosine-5'-phosphosulfate (APS) &gt;&gt; 3'-phosphoadenosine-5'-phosphosulfate (PAPS). Uses glutathione or DTT as source of protons. The chain is 5'-adenylylsulfate reductase 1, chloroplastic (APR1) from Arabidopsis thaliana (Mouse-ear cress).